Consider the following 334-residue polypeptide: Glutamyl-tRNA reductase (334 aa).

Substrate-binding positions include 49 to 52, Ser107, 112 to 114, and Gln118; these read TCNR and EDQ. Cys50 functions as the Nucleophile in the catalytic mechanism. 186 to 191 provides a ligand contact to NADP(+); it reads GNGEMG.

Belongs to the glutamyl-tRNA reductase family. As to quaternary structure, homodimer.

The enzyme catalyses (S)-4-amino-5-oxopentanoate + tRNA(Glu) + NADP(+) = L-glutamyl-tRNA(Glu) + NADPH + H(+). It functions in the pathway porphyrin-containing compound metabolism; protoporphyrin-IX biosynthesis; 5-aminolevulinate from L-glutamyl-tRNA(Glu): step 1/2. In terms of biological role, catalyzes the NADPH-dependent reduction of glutamyl-tRNA(Glu) to glutamate 1-semialdehyde (GSA). In Alkaliphilus oremlandii (strain OhILAs) (Clostridium oremlandii (strain OhILAs)), this protein is Glutamyl-tRNA reductase.